Here is an 874-residue protein sequence, read N- to C-terminus: Alanine--tRNA ligase (874 aa).

4 residues coordinate Zn(2+): His563, His567, Cys665, and His669.

This sequence belongs to the class-II aminoacyl-tRNA synthetase family. Requires Zn(2+) as cofactor.

The protein resides in the cytoplasm. It catalyses the reaction tRNA(Ala) + L-alanine + ATP = L-alanyl-tRNA(Ala) + AMP + diphosphate. Functionally, catalyzes the attachment of alanine to tRNA(Ala) in a two-step reaction: alanine is first activated by ATP to form Ala-AMP and then transferred to the acceptor end of tRNA(Ala). Also edits incorrectly charged Ser-tRNA(Ala) and Gly-tRNA(Ala) via its editing domain. This chain is Alanine--tRNA ligase, found in Actinobacillus succinogenes (strain ATCC 55618 / DSM 22257 / CCUG 43843 / 130Z).